Here is a 349-residue protein sequence, read N- to C-terminus: tRNA pseudouridine synthase D (349 aa).

Position 26 (phenylalanine 26) interacts with substrate. Aspartate 79 acts as the Nucleophile in catalysis. Asparagine 128 lines the substrate pocket. In terms of domain architecture, TRUD spans 154-302; that stretch reads GVPNYFGEQR…VEGCRRAILV (149 aa). Position 328 (phenylalanine 328) interacts with substrate.

The protein belongs to the pseudouridine synthase TruD family.

The enzyme catalyses uridine(13) in tRNA = pseudouridine(13) in tRNA. Functionally, responsible for synthesis of pseudouridine from uracil-13 in transfer RNAs. This is tRNA pseudouridine synthase D from Photorhabdus laumondii subsp. laumondii (strain DSM 15139 / CIP 105565 / TT01) (Photorhabdus luminescens subsp. laumondii).